Here is a 207-residue protein sequence, read N- to C-terminus: ATP-dependent Clp protease proteolytic subunit (207 aa).

Serine 111 serves as the catalytic Nucleophile. Residue histidine 136 is part of the active site.

Belongs to the peptidase S14 family. Fourteen ClpP subunits assemble into 2 heptameric rings which stack back to back to give a disk-like structure with a central cavity, resembling the structure of eukaryotic proteasomes.

The protein resides in the cytoplasm. It carries out the reaction Hydrolysis of proteins to small peptides in the presence of ATP and magnesium. alpha-casein is the usual test substrate. In the absence of ATP, only oligopeptides shorter than five residues are hydrolyzed (such as succinyl-Leu-Tyr-|-NHMec, and Leu-Tyr-Leu-|-Tyr-Trp, in which cleavage of the -Tyr-|-Leu- and -Tyr-|-Trp bonds also occurs).. Its function is as follows. Cleaves peptides in various proteins in a process that requires ATP hydrolysis. Has a chymotrypsin-like activity. Plays a major role in the degradation of misfolded proteins. This is ATP-dependent Clp protease proteolytic subunit from Pectobacterium atrosepticum (strain SCRI 1043 / ATCC BAA-672) (Erwinia carotovora subsp. atroseptica).